The sequence spans 449 residues: MTEISSMVISHKKAKIEEMESAWHGDLDGLLHNLYNHEYIHECVVLKTCNRVEIYVVSPSSSILFSFAKEMGASTHIIDFYGHDESLEHLLRLAGGLESMIVGEDQILGQIKELYAYSKKAGTTGKILDTAFDKAIQVGKRIRNETRINKGSVSIGSAAVDLAEEILDGLAGKSVLVIGAGEIGVLVAKALAAKDIEAIYIANRTFKKAEELAYELGGYAVKLNDVQTQLKNADVVISGTGAPHYILTREIVEKAIEERDKTRKLLLIDIANPRDIEESVAELDNVKLCNIDNLRVISEKTLKMRKEEAKKAEAIIQEEIKLLNLQYKRQRADKIISDLYKQIYDVRIREREKAVNRLCAYHTIGKIETDVLDDLTHSIANKILAEPTKVLRQAAELGNDEFLDVAARIFCLEKDKVKAEKIKSDCGIKVEKMKPDCESATDRVSEKGN.

Substrate-binding positions include 48-51 (TCNR), Ser-99, 104-106 (EDQ), and Gln-110. Cys-49 serves as the catalytic Nucleophile. Residue 179–184 (GAGEIG) participates in NADP(+) binding.

This sequence belongs to the glutamyl-tRNA reductase family. In terms of assembly, homodimer.

The enzyme catalyses (S)-4-amino-5-oxopentanoate + tRNA(Glu) + NADP(+) = L-glutamyl-tRNA(Glu) + NADPH + H(+). It functions in the pathway porphyrin-containing compound metabolism; protoporphyrin-IX biosynthesis; 5-aminolevulinate from L-glutamyl-tRNA(Glu): step 1/2. Functionally, catalyzes the NADPH-dependent reduction of glutamyl-tRNA(Glu) to glutamate 1-semialdehyde (GSA). This Methanosarcina barkeri (strain Fusaro / DSM 804) protein is Glutamyl-tRNA reductase.